A 209-amino-acid polypeptide reads, in one-letter code: Large ribosomal subunit protein bL25 (209 aa).

A disordered region spans residues 183-209 (TAGERPAAEPAAAPGAAPAAGPEEAEE). Positions 184–209 (AGERPAAEPAAAPGAAPAAGPEEAEE) are enriched in low complexity.

It belongs to the bacterial ribosomal protein bL25 family. CTC subfamily. Part of the 50S ribosomal subunit; part of the 5S rRNA/L5/L18/L25 subcomplex. Contacts the 5S rRNA. Binds to the 5S rRNA independently of L5 and L18.

Its function is as follows. This is one of the proteins that binds to the 5S RNA in the ribosome where it forms part of the central protuberance. This chain is Large ribosomal subunit protein bL25, found in Pelotomaculum thermopropionicum (strain DSM 13744 / JCM 10971 / SI).